The following is a 201-amino-acid chain: ATP-dependent Clp protease proteolytic subunit (201 aa).

S105 functions as the Nucleophile in the catalytic mechanism. H130 is a catalytic residue.

Belongs to the peptidase S14 family. As to quaternary structure, fourteen ClpP subunits assemble into 2 heptameric rings which stack back to back to give a disk-like structure with a central cavity, resembling the structure of eukaryotic proteasomes.

It is found in the cytoplasm. It catalyses the reaction Hydrolysis of proteins to small peptides in the presence of ATP and magnesium. alpha-casein is the usual test substrate. In the absence of ATP, only oligopeptides shorter than five residues are hydrolyzed (such as succinyl-Leu-Tyr-|-NHMec, and Leu-Tyr-Leu-|-Tyr-Trp, in which cleavage of the -Tyr-|-Leu- and -Tyr-|-Trp bonds also occurs).. Cleaves peptides in various proteins in a process that requires ATP hydrolysis. Has a chymotrypsin-like activity. Plays a major role in the degradation of misfolded proteins. The protein is ATP-dependent Clp protease proteolytic subunit of Acinetobacter baylyi (strain ATCC 33305 / BD413 / ADP1).